We begin with the raw amino-acid sequence, 476 residues long: Bifunctional protein HldE (476 aa).

The interval M1–G319 is ribokinase. N195–E198 provides a ligand contact to ATP. Residue D264 is part of the active site. Residues M344 to G476 are cytidylyltransferase.

In the N-terminal section; belongs to the carbohydrate kinase PfkB family. This sequence in the C-terminal section; belongs to the cytidylyltransferase family. Homodimer.

It carries out the reaction D-glycero-beta-D-manno-heptose 7-phosphate + ATP = D-glycero-beta-D-manno-heptose 1,7-bisphosphate + ADP + H(+). The enzyme catalyses D-glycero-beta-D-manno-heptose 1-phosphate + ATP + H(+) = ADP-D-glycero-beta-D-manno-heptose + diphosphate. It functions in the pathway nucleotide-sugar biosynthesis; ADP-L-glycero-beta-D-manno-heptose biosynthesis; ADP-L-glycero-beta-D-manno-heptose from D-glycero-beta-D-manno-heptose 7-phosphate: step 1/4. The protein operates within nucleotide-sugar biosynthesis; ADP-L-glycero-beta-D-manno-heptose biosynthesis; ADP-L-glycero-beta-D-manno-heptose from D-glycero-beta-D-manno-heptose 7-phosphate: step 3/4. Catalyzes the phosphorylation of D-glycero-D-manno-heptose 7-phosphate at the C-1 position to selectively form D-glycero-beta-D-manno-heptose-1,7-bisphosphate. Functionally, catalyzes the ADP transfer from ATP to D-glycero-beta-D-manno-heptose 1-phosphate, yielding ADP-D-glycero-beta-D-manno-heptose. This is Bifunctional protein HldE from Photobacterium profundum (strain SS9).